The chain runs to 570 residues: GTPase Obg (570 aa).

An Obg domain is found at 2 to 168; it reads SDFVDRVTVH…RDIILELKSI (167 aa). The interval 15-43 is disordered; it reads GDGGNGSAGIRREKYKPLAGPNGGNGGKG. Residues 169–349 enclose the OBG-type G domain; the sequence is ADVALVGFPS…LNFALAKLVK (181 aa). Residues 175–182, 200–204, 221–224, 301–304, and 330–332 each bind GTP; these read GFPSAGKS, FTTLV, DVPG, NKID, and STA. 2 residues coordinate Mg(2+): Ser182 and Thr202. Residues 382–468 form the OCT domain; it reads GRNAQVREFE…ERAVAFDWDP (87 aa). Residues 521-570 form a disordered region; the sequence is RAAMQAERAAGHWADPSIDDDRHDEQSLFGRGEVEEYEDEPGADGSRQLD.

It belongs to the TRAFAC class OBG-HflX-like GTPase superfamily. OBG GTPase family. Monomer. The cofactor is Mg(2+).

The protein localises to the cytoplasm. Its function is as follows. An essential GTPase which binds GTP, GDP and possibly (p)ppGpp with moderate affinity, with high nucleotide exchange rates and a fairly low GTP hydrolysis rate. Plays a role in control of the cell cycle, stress response, ribosome biogenesis and in those bacteria that undergo differentiation, in morphogenesis control. The polypeptide is GTPase Obg (Bifidobacterium animalis subsp. lactis (strain AD011)).